We begin with the raw amino-acid sequence, 410 residues long: Translation initiation factor 2 subunit gamma (410 aa).

Positions 6–203 (QSEVNIGMVG…AIQEFIPTPE (198 aa)) constitute a tr-type G domain. The tract at residues 15-22 (GHVDHGKT) is G1. Mg(2+) contacts are provided by Asp18, Thr22, Gly43, and Ser45. 18 to 23 (DHGKTS) lines the GTP pocket. A G2 region spans residues 43 to 47 (GISIR). The Zn(2+) site is built by Cys58, Cys61, Cys73, and Cys76. A G3 region spans residues 90–93 (DAPG). Residues 146–149 (NKID) and 181–183 (SAH) contribute to the GTP site. The G4 stretch occupies residues 146 to 149 (NKID). The segment at 181–183 (SAH) is G5.

Belongs to the TRAFAC class translation factor GTPase superfamily. Classic translation factor GTPase family. EIF2G subfamily. Heterotrimer composed of an alpha, a beta and a gamma chain. Mg(2+) serves as cofactor.

The enzyme catalyses GTP + H2O = GDP + phosphate + H(+). In terms of biological role, eIF-2 functions in the early steps of protein synthesis by forming a ternary complex with GTP and initiator tRNA. This chain is Translation initiation factor 2 subunit gamma, found in Methanococcus maripaludis (strain C7 / ATCC BAA-1331).